The following is a 155-amino-acid chain: SsrA-binding protein (155 aa).

The protein belongs to the SmpB family.

It is found in the cytoplasm. Required for rescue of stalled ribosomes mediated by trans-translation. Binds to transfer-messenger RNA (tmRNA), required for stable association of tmRNA with ribosomes. tmRNA and SmpB together mimic tRNA shape, replacing the anticodon stem-loop with SmpB. tmRNA is encoded by the ssrA gene; the 2 termini fold to resemble tRNA(Ala) and it encodes a 'tag peptide', a short internal open reading frame. During trans-translation Ala-aminoacylated tmRNA acts like a tRNA, entering the A-site of stalled ribosomes, displacing the stalled mRNA. The ribosome then switches to translate the ORF on the tmRNA; the nascent peptide is terminated with the 'tag peptide' encoded by the tmRNA and targeted for degradation. The ribosome is freed to recommence translation, which seems to be the essential function of trans-translation. This is SsrA-binding protein from Streptococcus pyogenes serotype M18 (strain MGAS8232).